The following is a 308-amino-acid chain: MSSISNVYHDYSSFSNATTFSQVYQNFNQLDNLNVFEKLWGSYYYYMANDLFATGLLFFLTHEIFYFGRCLPWAIIDRIPYFRKWKIQDEKIPSDKEQWECLKSVLTSHFLVEAFPIWFFHPLCQKIGISYQVPFPKITDMLIQWAVFFVLEDTWHYWFHRGLHYGVFYKYIHKQHHRYAAPFGLAAEYAHPVEVALLGLGTVGIPIVWCLITGNLHLFTVSIWIILRLFQAVDAHSGYEFPWSLHNFLPFWAGADHHDEHHHYFIGGYSSSFRWWDFILDTEAGPKAKKGREDKVKQNVEKLQKKNL.

Residues 56 to 76 traverse the membrane as a helical segment; sequence LLFFLTHEIFYFGRCLPWAII. The region spanning 145–282 is the Fatty acid hydroxylase domain; the sequence is WAVFFVLEDT…FRWWDFILDT (138 aa). The short motif at 160 to 164 is the Histidine box-1 element; sequence HRGLH. The short motif at 173 to 177 is the Histidine box-2 element; sequence HKQHH. Positions 257–263 match the Histidine box-3 motif; the sequence is HHDEHHH.

It belongs to the sterol desaturase family. Fe cation serves as cofactor.

It localises to the endoplasmic reticulum membrane. The catalysed reaction is 4,4-dimethyl-5alpha-cholest-7-en-3beta-ol + 6 Fe(II)-[cytochrome b5] + 3 O2 + 5 H(+) = 4alpha-carboxy-4beta-methyl-5alpha-cholest-7-ene-3beta-ol + 6 Fe(III)-[cytochrome b5] + 4 H2O. It participates in steroid biosynthesis; zymosterol biosynthesis; zymosterol from lanosterol: step 3/6. Its function is as follows. C-4 methylsterol oxidase; part of the third module of ergosterol biosynthesis pathway that includes the late steps of the pathway. ERG25 is a catalytic component of the C-4 demethylation complex that catalyzes the conversion of 4,4-dimethylfecosterol into fecosterol via 4-methylfecosterol. Catalyzes the three-step monooxygenation required for the demethylation of 4,4-dimethyl and 4alpha-methylsterols. The third module or late pathway involves the ergosterol synthesis itself through consecutive reactions that mainly occur in the endoplasmic reticulum (ER) membrane. Firstly, the squalene synthase ERG9 catalyzes the condensation of 2 farnesyl pyrophosphate moieties to form squalene, which is the precursor of all steroids. Squalene synthase is crucial for balancing the incorporation of farnesyl diphosphate (FPP) into sterol and nonsterol isoprene synthesis. Secondly, the squalene epoxidase ERG1 catalyzes the stereospecific oxidation of squalene to (S)-2,3-epoxysqualene, which is considered to be a rate-limiting enzyme in steroid biosynthesis. Then, the lanosterol synthase ERG7 catalyzes the cyclization of (S)-2,3 oxidosqualene to lanosterol, a reaction that forms the sterol core. In the next steps, lanosterol is transformed to zymosterol through a complex process involving various demethylation, reduction and desaturation reactions. The lanosterol 14-alpha-demethylase ERG11 (also known as CYP51) catalyzes C14-demethylation of lanosterol to produce 4,4'-dimethyl cholesta-8,14,24-triene-3-beta-ol, which is critical for ergosterol biosynthesis. The C-14 reductase ERG24 reduces the C14=C15 double bond of 4,4-dimethyl-cholesta-8,14,24-trienol to produce 4,4-dimethyl-cholesta-8,24-dienol. 4,4-dimethyl-cholesta-8,24-dienol is substrate of the C-4 demethylation complex ERG25-ERG26-ERG27 in which ERG25 catalyzes the three-step monooxygenation required for the demethylation of 4,4-dimethyl and 4alpha-methylsterols, ERG26 catalyzes the oxidative decarboxylation that results in a reduction of the 3-beta-hydroxy group at the C-3 carbon to an oxo group, and ERG27 is responsible for the reduction of the keto group on the C-3. ERG28 has a role as a scaffold to help anchor ERG25, ERG26 and ERG27 to the endoplasmic reticulum and ERG29 regulates the activity of the iron-containing C4-methylsterol oxidase ERG25. Then, the sterol 24-C-methyltransferase ERG6 catalyzes the methyl transfer from S-adenosyl-methionine to the C-24 of zymosterol to form fecosterol. The C-8 sterol isomerase ERG2 catalyzes the reaction which results in unsaturation at C-7 in the B ring of sterols and thus converts fecosterol to episterol. The sterol-C5-desaturase ERG3 then catalyzes the introduction of a C-5 double bond in the B ring to produce 5-dehydroepisterol. The C-22 sterol desaturase ERG5 further converts 5-dehydroepisterol into ergosta-5,7,22,24(28)-tetraen-3beta-ol by forming the C-22(23) double bond in the sterol side chain. Finally, ergosta-5,7,22,24(28)-tetraen-3beta-ol is substrate of the C-24(28) sterol reductase ERG4 to produce ergosterol. The sequence is that of C-4 methylsterol oxidase from Candida albicans (strain SC5314 / ATCC MYA-2876) (Yeast).